The following is a 481-amino-acid chain: Proline--tRNA ligase (481 aa).

The protein belongs to the class-II aminoacyl-tRNA synthetase family. ProS type 3 subfamily. Homodimer.

It localises to the cytoplasm. The catalysed reaction is tRNA(Pro) + L-proline + ATP = L-prolyl-tRNA(Pro) + AMP + diphosphate. Its function is as follows. Catalyzes the attachment of proline to tRNA(Pro) in a two-step reaction: proline is first activated by ATP to form Pro-AMP and then transferred to the acceptor end of tRNA(Pro). This chain is Proline--tRNA ligase, found in Chlorobium phaeobacteroides (strain DSM 266 / SMG 266 / 2430).